Reading from the N-terminus, the 616-residue chain is Chaperone protein DnaK (616 aa).

At T174 the chain carries Phosphothreonine; by autocatalysis. The interval 575–616 (QQTQGAQSDPGAAGFGGQQEAPGAGQDENVVDADYKVVDDDK) is disordered. Residues 607 to 616 (ADYKVVDDDK) show a composition bias toward basic and acidic residues.

Belongs to the heat shock protein 70 family.

Acts as a chaperone. This is Chaperone protein DnaK from Ruminiclostridium cellulolyticum (strain ATCC 35319 / DSM 5812 / JCM 6584 / H10) (Clostridium cellulolyticum).